Here is a 643-residue protein sequence, read N- to C-terminus: Fructose-1,6-bisphosphatase class 3 (643 aa).

It belongs to the FBPase class 3 family. Requires Mn(2+) as cofactor.

The catalysed reaction is beta-D-fructose 1,6-bisphosphate + H2O = beta-D-fructose 6-phosphate + phosphate. It participates in carbohydrate biosynthesis; gluconeogenesis. This Lacticaseibacillus casei (strain BL23) (Lactobacillus casei) protein is Fructose-1,6-bisphosphatase class 3.